We begin with the raw amino-acid sequence, 288 residues long: Bifunctional protein FolD (288 aa).

NADP(+) contacts are provided by residues 166–168 (GAS) and isoleucine 232.

It belongs to the tetrahydrofolate dehydrogenase/cyclohydrolase family. Homodimer.

It catalyses the reaction (6R)-5,10-methylene-5,6,7,8-tetrahydrofolate + NADP(+) = (6R)-5,10-methenyltetrahydrofolate + NADPH. It carries out the reaction (6R)-5,10-methenyltetrahydrofolate + H2O = (6R)-10-formyltetrahydrofolate + H(+). The protein operates within one-carbon metabolism; tetrahydrofolate interconversion. Catalyzes the oxidation of 5,10-methylenetetrahydrofolate to 5,10-methenyltetrahydrofolate and then the hydrolysis of 5,10-methenyltetrahydrofolate to 10-formyltetrahydrofolate. This Salmonella enteritidis PT4 (strain P125109) protein is Bifunctional protein FolD.